A 311-amino-acid polypeptide reads, in one-letter code: tRNA dimethylallyltransferase (311 aa).

13–20 (GPTASGKT) contacts ATP. 15–20 (TASGKT) contacts substrate. 2 interaction with substrate tRNA regions span residues 38–41 (DSMQ) and 166–170 (QRVLR).

This sequence belongs to the IPP transferase family. As to quaternary structure, monomer. Mg(2+) is required as a cofactor.

It catalyses the reaction adenosine(37) in tRNA + dimethylallyl diphosphate = N(6)-dimethylallyladenosine(37) in tRNA + diphosphate. Its function is as follows. Catalyzes the transfer of a dimethylallyl group onto the adenine at position 37 in tRNAs that read codons beginning with uridine, leading to the formation of N6-(dimethylallyl)adenosine (i(6)A). This Staphylococcus aureus (strain MRSA252) protein is tRNA dimethylallyltransferase.